The primary structure comprises 430 residues: Enolase (430 aa).

(2R)-2-phosphoglycerate is bound at residue glutamine 163. Glutamate 205 acts as the Proton donor in catalysis. Residues aspartate 242, glutamate 287, and aspartate 314 each contribute to the Mg(2+) site. (2R)-2-phosphoglycerate-binding residues include lysine 339, arginine 368, serine 369, and lysine 390. Lysine 339 acts as the Proton acceptor in catalysis.

Belongs to the enolase family. Requires Mg(2+) as cofactor.

The protein resides in the cytoplasm. It localises to the secreted. It is found in the cell surface. The catalysed reaction is (2R)-2-phosphoglycerate = phosphoenolpyruvate + H2O. It participates in carbohydrate degradation; glycolysis; pyruvate from D-glyceraldehyde 3-phosphate: step 4/5. Functionally, catalyzes the reversible conversion of 2-phosphoglycerate (2-PG) into phosphoenolpyruvate (PEP). It is essential for the degradation of carbohydrates via glycolysis. This Listeria innocua serovar 6a (strain ATCC BAA-680 / CLIP 11262) protein is Enolase.